A 658-amino-acid polypeptide reads, in one-letter code: Heat shock 70 kDa protein, mitochondrial (658 aa).

The tract at residues 629–658 (KLDSSASKSSSTENKENKDNTTEAEFTEKK) is disordered. A compositionally biased stretch (low complexity) spans 631-640 (DSSASKSSST). Positions 641 to 658 (ENKENKDNTTEAEFTEKK) are enriched in basic and acidic residues.

The protein belongs to the heat shock protein 70 family.

The protein localises to the mitochondrion. Its function is as follows. May function in protein folding and assembly, and disassembly of protein complexes. The protein is Heat shock 70 kDa protein, mitochondrial (mhsp70) of Dictyostelium discoideum (Social amoeba).